The primary structure comprises 726 residues: Probable dipeptidyl-peptidase 5 (726 aa).

A signal peptide spans 1–19 (MAAAKWLIASLAFASSGLA). N-linked (GlcNAc...) asparagine glycosylation is found at N96 and N252. A disordered region spans residues 269–291 (AEPINKRNGPRTPQGIEGASSSP). N-linked (GlcNAc...) asparagine glycosylation is present at N485. S558 acts as the Charge relay system in catalysis. N-linked (GlcNAc...) asparagine glycosylation is present at N605. Residues D641 and H673 each act as charge relay system in the active site. An N-linked (GlcNAc...) asparagine glycan is attached at N699.

It belongs to the peptidase S9C family.

It localises to the secreted. In terms of biological role, extracellular dipeptidyl-peptidase which removes N-terminal dipeptides sequentially from polypeptides having unsubstituted N-termini. Contributes to pathogenicity. In Arthroderma benhamiae (strain ATCC MYA-4681 / CBS 112371) (Trichophyton mentagrophytes), this protein is Probable dipeptidyl-peptidase 5 (DPP5).